The chain runs to 112 residues: Putative pterin-4-alpha-carbinolamine dehydratase (112 aa).

Belongs to the pterin-4-alpha-carbinolamine dehydratase family.

The catalysed reaction is (4aS,6R)-4a-hydroxy-L-erythro-5,6,7,8-tetrahydrobiopterin = (6R)-L-erythro-6,7-dihydrobiopterin + H2O. This is Putative pterin-4-alpha-carbinolamine dehydratase from Shewanella pealeana (strain ATCC 700345 / ANG-SQ1).